The primary structure comprises 184 residues: ATP synthase subunit b (184 aa).

A helical membrane pass occupies residues Ile-25–Val-45.

This sequence belongs to the ATPase B chain family. As to quaternary structure, F-type ATPases have 2 components, F(1) - the catalytic core - and F(0) - the membrane proton channel. F(1) has five subunits: alpha(3), beta(3), gamma(1), delta(1), epsilon(1). F(0) has three main subunits: a(1), b(2) and c(10-14). The alpha and beta chains form an alternating ring which encloses part of the gamma chain. F(1) is attached to F(0) by a central stalk formed by the gamma and epsilon chains, while a peripheral stalk is formed by the delta and b chains.

It is found in the cell membrane. F(1)F(0) ATP synthase produces ATP from ADP in the presence of a proton or sodium gradient. F-type ATPases consist of two structural domains, F(1) containing the extramembraneous catalytic core and F(0) containing the membrane proton channel, linked together by a central stalk and a peripheral stalk. During catalysis, ATP synthesis in the catalytic domain of F(1) is coupled via a rotary mechanism of the central stalk subunits to proton translocation. Its function is as follows. Component of the F(0) channel, it forms part of the peripheral stalk, linking F(1) to F(0). The protein is ATP synthase subunit b of Mycoplasma mobile (strain ATCC 43663 / 163K / NCTC 11711) (Mesomycoplasma mobile).